A 746-amino-acid polypeptide reads, in one-letter code: NAD(P)H-quinone oxidoreductase subunit 5, chloroplastic (746 aa).

16 helical membrane-spanning segments follow: residues 9–29, 39–59, 89–109, 125–145, 147–167, 185–205, 221–241, 258–278, 280–300, 327–347, 354–374, 396–416, 425–445, 547–567, 608–628, and 723–743; these read WIIPFIPLPVPILLGVGLLLF, IWTFLSIFLLSIVMIFSLYLS, IDPLTSIMSILITTVGILVLI, FAYMGFFNTSMLGLVTSSNLI, VYFFWELVGMCSYLLIGFWFT, GDFGLLLGILGLYWITGSFEF, VNFFFFTLCGFLLFVGPIAKS, TPISALIHAATMVAAGIFLVA, LLPLFIVIPSIMYIISLIGII, LGYMMLALGMGSYRSALFHLI, ALLFLGSGSIIHSMEAIVGYS, TAFLIGTLSLCGIPPLACFWS, LLFSPIFAIIACSTAGLTAFY, ILFPILILLLFTLFIGAIGIP, FSVSIAFFGIFIAYCLYKPFY, and YLFFYLSYVLIFLLILFFFYF.

The protein belongs to the complex I subunit 5 family. In terms of assembly, NDH is composed of at least 16 different subunits, 5 of which are encoded in the nucleus.

Its subcellular location is the plastid. The protein resides in the chloroplast thylakoid membrane. The enzyme catalyses a plastoquinone + NADH + (n+1) H(+)(in) = a plastoquinol + NAD(+) + n H(+)(out). The catalysed reaction is a plastoquinone + NADPH + (n+1) H(+)(in) = a plastoquinol + NADP(+) + n H(+)(out). NDH shuttles electrons from NAD(P)H:plastoquinone, via FMN and iron-sulfur (Fe-S) centers, to quinones in the photosynthetic chain and possibly in a chloroplast respiratory chain. The immediate electron acceptor for the enzyme in this species is believed to be plastoquinone. Couples the redox reaction to proton translocation, and thus conserves the redox energy in a proton gradient. The polypeptide is NAD(P)H-quinone oxidoreductase subunit 5, chloroplastic (ndhF) (Capsella bursa-pastoris (Shepherd's purse)).